The sequence spans 164 residues: FMN reductase (NADH) RutF (164 aa).

Belongs to the non-flavoprotein flavin reductase family. RutF subfamily.

The enzyme catalyses FMNH2 + NAD(+) = FMN + NADH + 2 H(+). Functionally, catalyzes the reduction of FMN to FMNH2 which is used to reduce pyrimidine by RutA via the Rut pathway. In Klebsiella pneumoniae (strain 342), this protein is FMN reductase (NADH) RutF.